A 201-amino-acid chain; its full sequence is Large ribosomal subunit protein uL4 (201 aa).

A disordered region spans residues 44 to 71; the sequence is RAQKTRAEVSGSGKKPWRQKGTGRARSG.

The protein belongs to the universal ribosomal protein uL4 family. As to quaternary structure, part of the 50S ribosomal subunit.

One of the primary rRNA binding proteins, this protein initially binds near the 5'-end of the 23S rRNA. It is important during the early stages of 50S assembly. It makes multiple contacts with different domains of the 23S rRNA in the assembled 50S subunit and ribosome. In terms of biological role, forms part of the polypeptide exit tunnel. In Photorhabdus laumondii subsp. laumondii (strain DSM 15139 / CIP 105565 / TT01) (Photorhabdus luminescens subsp. laumondii), this protein is Large ribosomal subunit protein uL4.